We begin with the raw amino-acid sequence, 57 residues long: VVYCNARTTCPSRTTCCRSPFGVWYCCPFLMGQCCRDGRHCCRHGYRCDSTSTLCLR.

Intrachain disulfides connect cysteine 4-cysteine 16 and cysteine 10-cysteine 26.

This sequence belongs to the granulin family. Granulins are disulfide bridged. As to expression, ubiquitous.

It localises to the secreted. Functionally, granulins have possible cytokine-like activity. They may play a role in inflammation, wound repair, and tissue remodeling. The chain is Granulin-2 from Cyprinus carpio (Common carp).